Here is a 211-residue protein sequence, read N- to C-terminus: Protein-L-isoaspartate O-methyltransferase (211 aa).

The active site involves Ser-60.

It belongs to the methyltransferase superfamily. L-isoaspartyl/D-aspartyl protein methyltransferase family.

The protein localises to the cytoplasm. It catalyses the reaction [protein]-L-isoaspartate + S-adenosyl-L-methionine = [protein]-L-isoaspartate alpha-methyl ester + S-adenosyl-L-homocysteine. Its function is as follows. Catalyzes the methyl esterification of L-isoaspartyl residues in peptides and proteins that result from spontaneous decomposition of normal L-aspartyl and L-asparaginyl residues. It plays a role in the repair and/or degradation of damaged proteins. This Hahella chejuensis (strain KCTC 2396) protein is Protein-L-isoaspartate O-methyltransferase.